A 198-amino-acid chain; its full sequence is V-type ATP synthase subunit E 1 (198 aa).

Belongs to the V-ATPase E subunit family.

Functionally, produces ATP from ADP in the presence of a proton gradient across the membrane. The chain is V-type ATP synthase subunit E 1 from Clostridium tetani (strain Massachusetts / E88).